We begin with the raw amino-acid sequence, 313 residues long: Probable 5-dehydro-4-deoxyglucarate dehydratase (313 aa).

It belongs to the DapA family.

The enzyme catalyses 5-dehydro-4-deoxy-D-glucarate + H(+) = 2,5-dioxopentanoate + CO2 + H2O. It functions in the pathway carbohydrate acid metabolism; D-glucarate degradation; 2,5-dioxopentanoate from D-glucarate: step 2/2. The chain is Probable 5-dehydro-4-deoxyglucarate dehydratase from Bradyrhizobium sp. (strain BTAi1 / ATCC BAA-1182).